The following is a 245-amino-acid chain: Tryptophan synthase alpha chain (245 aa).

Residues Glu-37 and Asp-48 each act as proton acceptor in the active site.

It belongs to the TrpA family. As to quaternary structure, tetramer of two alpha and two beta chains.

The catalysed reaction is (1S,2R)-1-C-(indol-3-yl)glycerol 3-phosphate + L-serine = D-glyceraldehyde 3-phosphate + L-tryptophan + H2O. Its pathway is amino-acid biosynthesis; L-tryptophan biosynthesis; L-tryptophan from chorismate: step 5/5. Functionally, the alpha subunit is responsible for the aldol cleavage of indoleglycerol phosphate to indole and glyceraldehyde 3-phosphate. This is Tryptophan synthase alpha chain from Saccharolobus solfataricus (strain ATCC 35092 / DSM 1617 / JCM 11322 / P2) (Sulfolobus solfataricus).